A 198-amino-acid polypeptide reads, in one-letter code: Armadillo repeat-containing protein 7 (198 aa).

ARM repeat units lie at residues 57-99 (QVLD…QAGG) and 100-140 (LPLI…TSLP). A Phosphoserine modification is found at S169.

As to quaternary structure, component of the minor spliceosome. Within this complex, interacts with RBM48.

Functionally, as a component of the minor spliceosome, involved in the splicing of U12-type introns in pre-mRNAs. This chain is Armadillo repeat-containing protein 7 (Armc7), found in Mus musculus (Mouse).